We begin with the raw amino-acid sequence, 471 residues long: Coagulation factor IX (471 aa).

Residues 1-19 form the signal peptide; sequence MAKIPLILSFCLLEAFLGA. Residues 20 to 39 constitute a propeptide that is removed on maturation; it reads ESTVFIENKEASTVLSRTRR. Residues 40–85 form the Gla domain; sequence GNSNRLEELIPGNLERECIEEKCSFEEAREVFENTEKTMEFWKIYI. Asn-41, Glu-46, Glu-47, Glu-54, Glu-56, Glu-59, Glu-60, Glu-65, Glu-66, and Glu-69 together coordinate Ca(2+). A 4-carboxyglutamate mark is found at Glu-46, Glu-47, Glu-54, Glu-56, Glu-59, Glu-60, Glu-65, Glu-66, Glu-69, Glu-72, Glu-75, and Glu-79. Position 54 (Glu-54) interacts with Mg(2+). Residues Cys-57 and Cys-62 are joined by a disulfide bond. Glu-59 is a Mg(2+) binding site. Position 65 (Glu-65) interacts with Mg(2+). Glu-69 is a Mg(2+) binding site. 5 residues coordinate Ca(2+): Glu-75, Glu-79, Asp-86, Gly-87, and Gln-89. The Mg(2+) site is built by Glu-75 and Glu-79. The 37-residue stretch at 86–122 folds into the EGF-like 1; calcium-binding domain; sequence DGDQCNSNPCKNGAVCKDGVSSYECMCPPGYGGRNCE. Disulfide bonds link Cys-90-Cys-101, Cys-95-Cys-110, Cys-112-Cys-121, Cys-127-Cys-138, Cys-134-Cys-148, Cys-150-Cys-163, Cys-171-Cys-345, Cys-262-Cys-278, Cys-392-Cys-406, and Cys-417-Cys-445. The O-linked (Glc...) serine glycan is linked to Ser-92. Ca(2+) is bound at residue Asp-103. Asp-103 carries the (3R)-3-hydroxyaspartate modification. A Phosphoserine modification is found at Ser-107. An EGF-like 2 domain is found at 123 to 164; sequence IDSTCATKNGGCEHFCRHDTPQKAVCSCASGYKLHEDGKSCK. Positions 186 to 235 are cleaved as a propeptide — activation peptide; the sequence is TENTIERWNITAHDEGDAHDEALDITEPPPPPTTSAAPAKIVPITKNDTR. Positions 236–469 constitute a Peptidase S1 domain; it reads VVGGYDSVKG…YVKWIRETTR (234 aa). His-277 (charge relay system) is an active-site residue. Positions 291, 293, 296, and 301 each coordinate Ca(2+). The Charge relay system role is filled by Asp-325. Ser-421 functions as the Charge relay system in the catalytic mechanism.

Belongs to the peptidase S1 family. As to quaternary structure, heterodimer of a light chain and a heavy chain; disulfide-linked. Activated by factor XIa, which excises the activation peptide. The propeptide can also be removed by snake venom protease. Activated by coagulation factor VIIa-tissue factor (F7-F3) complex in calcium-dependent manner. In terms of processing, the iron and 2-oxoglutarate dependent 3-hydroxylation of aspartate and asparagine is (R) stereospecific within EGF domains.

Its subcellular location is the secreted. It catalyses the reaction Selective cleavage of Arg-|-Ile bond in factor X to form factor Xa.. Factor IX is a vitamin K-dependent plasma protein that participates in the intrinsic pathway of blood coagulation by converting factor X to its active form in the presence of Ca(2+) ions, phospholipids, and factor VIIIa. The sequence is that of Coagulation factor IX (F9) from Gallus gallus (Chicken).